Consider the following 470-residue polypeptide: Putative multidrug resistance protein MdtD (470 aa).

Residues 1 to 11 (MTELPDNTRWQ) lie on the Periplasmic side of the membrane. The chain crosses the membrane as a helical span at residues 12–32 (LWIVAFGFFMQSLDTTIVNTA). The Cytoplasmic segment spans residues 33 to 48 (LPSMAKSLGESPLHMH). A helical membrane pass occupies residues 49-69 (MVVVSYVLTVAVMLPASGWLA). At 70 to 76 (DKIGVRN) the chain is on the periplasmic side. A helical transmembrane segment spans residues 77–97 (IFFAAIVLFTLGSLFCALSGT). At 98–101 (LNQL) the chain is on the cytoplasmic side. A helical membrane pass occupies residues 102–124 (VLARVLQGVGGAMMVPVGRLTVM). Residues 125-137 (KIVPRAQYMAAMT) lie on the Periplasmic side of the membrane. The helical transmembrane segment at 138–158 (FVTLPGQIGPLLGPALGGVLV) threads the bilayer. Topologically, residues 159–164 (EYASWH) are cytoplasmic. A helical transmembrane segment spans residues 165 to 185 (WIFLINIPVGIVGAMATFMLM). Residues 186 to 196 (PNYIIETRRFD) are Periplasmic-facing. A helical membrane pass occupies residues 197 to 217 (LPGFLLLAIGMAVLTLALDGS). Residues 218–224 (KSMGISP) lie on the Cytoplasmic side of the membrane. The helical transmembrane segment at 225–245 (WTLAGLAAGGAAAILLYLFHA) threads the bilayer. Residues 246-262 (KKNSGALFSLRLFRTPT) are Periplasmic-facing. Residues 263–283 (FSLGLLGSFAGRIGSGMLPFM) traverse the membrane as a helical segment. Residues 284–285 (TP) lie on the Cytoplasmic side of the membrane. The chain crosses the membrane as a helical span at residues 286–306 (VFLQIGLGFSPFHAGLMMIPM). The Periplasmic segment spans residues 307–341 (VLGSMGMKRIVVQIVNRFGYRRVLVATTLGLALVS). A helical transmembrane segment spans residues 342–362 (LLFMSVALLGWYYLLPLVLLL). Topologically, residues 363–395 (QGMVNSARFSSMNTLTLKDLPDTLASSGNSLLS) are cytoplasmic. A helical transmembrane segment spans residues 396–416 (MIMQLSMSIGVTIAGMLLGMF). Residues 417–430 (GQQHIGIDSSATHH) lie on the Periplasmic side of the membrane. A helical membrane pass occupies residues 431-451 (VFMYTWLCMAVIIALPAIIFA). At 452–470 (RVPNDTQQNMVISRRKRSL) the chain is on the cytoplasmic side.

It belongs to the major facilitator superfamily. TCR/Tet family.

The protein resides in the cell inner membrane. This is Putative multidrug resistance protein MdtD from Salmonella typhimurium (strain LT2 / SGSC1412 / ATCC 700720).